A 276-amino-acid chain; its full sequence is uncharacterized protein (276 aa).

Residues 20–137 (PVLIFIPGAN…PPINTFLPDS (118 aa)) enclose the AB hydrolase-1 domain. The tract at residues 57 to 76 (GESELTEPLPDSASNPDSDY) is disordered.

The protein belongs to the AB hydrolase superfamily.

This is an uncharacterized protein from Staphylococcus aureus (strain COL).